Here is a 452-residue protein sequence, read N- to C-terminus: Probable glycine dehydrogenase (decarboxylating) subunit 1 (452 aa).

Belongs to the GcvP family. N-terminal subunit subfamily. As to quaternary structure, the glycine cleavage system is composed of four proteins: P, T, L and H. In this organism, the P 'protein' is a heterodimer of two subunits.

The enzyme catalyses N(6)-[(R)-lipoyl]-L-lysyl-[glycine-cleavage complex H protein] + glycine + H(+) = N(6)-[(R)-S(8)-aminomethyldihydrolipoyl]-L-lysyl-[glycine-cleavage complex H protein] + CO2. In terms of biological role, the glycine cleavage system catalyzes the degradation of glycine. The P protein binds the alpha-amino group of glycine through its pyridoxal phosphate cofactor; CO(2) is released and the remaining methylamine moiety is then transferred to the lipoamide cofactor of the H protein. The sequence is that of Probable glycine dehydrogenase (decarboxylating) subunit 1 from Nitrosospira multiformis (strain ATCC 25196 / NCIMB 11849 / C 71).